The chain runs to 81 residues: Small ribosomal subunit protein bS16 (81 aa).

It belongs to the bacterial ribosomal protein bS16 family.

This chain is Small ribosomal subunit protein bS16, found in Neisseria meningitidis serogroup C (strain 053442).